The chain runs to 1237 residues: Zinc finger protein 687 (1237 aa).

2 disordered regions span residues 1–80 and 96–330; these read MGDM…PDIS and EALA…PLKV. Positions 97–111 are enriched in low complexity; sequence ALAGGSAGDGAQAAG. Ser102, Ser129, and Ser140 each carry phosphoserine. Pro residues predominate over residues 132 to 144; that stretch reads PSLPGTPHSPAPP. Position 148 is a phosphothreonine (Thr148). 6 positions are modified to phosphoserine: Ser227, Ser242, Ser251, Ser253, Ser266, and Ser271. Residues 234-244 are compositionally biased toward polar residues; sequence LAQQGSGSSPK. Lys285 participates in a covalent cross-link: Glycyl lysine isopeptide (Lys-Gly) (interchain with G-Cter in SUMO2). Positions 297–310 are enriched in low complexity; the sequence is SSPGSPQSPSSGAE. Residues Lys336 and Lys372 each participate in a glycyl lysine isopeptide (Lys-Gly) (interchain with G-Cter in SUMO2) cross-link. Residue Ser374 is modified to Phosphoserine. A Phosphothreonine modification is found at Thr377. Glycyl lysine isopeptide (Lys-Gly) (interchain with G-Cter in SUMO2) cross-links involve residues Lys384, Lys397, and Lys422. Ser433 is modified (phosphoserine). Residues Lys435, Lys439, Lys451, and Lys464 each participate in a glycyl lysine isopeptide (Lys-Gly) (interchain with G-Cter in SUMO2) cross-link. Ser495 is modified (phosphoserine). The C2H2-type 1; degenerate zinc finger occupies 533 to 552; sequence YRCLECGDAFSLEKSLARHY. 5 C2H2-type zinc fingers span residues 705 to 727, 764 to 787, 792 to 815, 827 to 849, and 858 to 881; these read NVCP…QRMH, YRCP…QTSH, HKCP…YSQH, YKCA…FDQH, and FKCP…KNTH. Over residues 880-890 the composition is skewed to basic and acidic residues; sequence THQSGRLEETA. Positions 880–957 are disordered; it reads THQSGRLEET…LGSKGLKGGG (78 aa). Phosphothreonine is present on Thr900. The segment covering 915-925 has biased composition (low complexity); that stretch reads AAPATEESSSS. A Glycyl lysine isopeptide (Lys-Gly) (interchain with G-Cter in SUMO2) cross-link involves residue Lys954. 2 consecutive C2H2-type zinc fingers follow at residues 963–986 and 993–1016; these read WTCG…KKEH and FPCR…RVNH. Lys1043 is covalently cross-linked (Glycyl lysine isopeptide (Lys-Gly) (interchain with G-Cter in SUMO2)). The segment at 1051-1121 is disordered; that stretch reads LQLGAQSPGR…LRYRSSSSTE (71 aa). Residue Ser1057 is modified to Phosphoserine. Position 1060 is an omega-N-methylarginine (Arg1060). Phosphoserine occurs at positions 1082, 1083, and 1085. Omega-N-methylarginine is present on Arg1101. Residues Ser1106 and Ser1118 each carry the phosphoserine modification. The C2H2-type 9 zinc finger occupies 1135 to 1158; sequence QQCLDCGLCFASPGSLSRHRFISH. The interval 1159 to 1195 is disordered; it reads KKRRGVGKASALGLGDGEEEAPPSRSDPDGGDSPLPA. Phosphoserine occurs at positions 1184, 1191, and 1211. A C2H2-type 10 zinc finger spans residues 1200–1222; sequence LTCKVCGKSCDSPLNLKTHFRTH.

It belongs to the krueppel C2H2-type zinc-finger protein family. Interacts with ZMYND8. Widely expressed with highest levels in obvary, muscle, blood and lung.

It is found in the cytoplasm. It localises to the nucleus. Functionally, may be involved in transcriptional regulation. In Homo sapiens (Human), this protein is Zinc finger protein 687 (ZNF687).